Here is a 380-residue protein sequence, read N- to C-terminus: Alcohol dehydrogenase 1 (380 aa).

The Zn(2+) site is built by Cys-48, Thr-50, His-70, Cys-100, Cys-103, Cys-106, Cys-114, and Cys-178. An alcohol contacts are provided by Thr-50 and His-70. Residue Thr-50 coordinates NAD(+). NAD(+) is bound by residues 203–208 (GLGAVG), Asp-227, Arg-232, Thr-273, Val-296, 296–298 (VGV), and Arg-373.

The protein belongs to the zinc-containing alcohol dehydrogenase family. Homodimer. Zn(2+) serves as cofactor.

The protein resides in the cytoplasm. It catalyses the reaction a primary alcohol + NAD(+) = an aldehyde + NADH + H(+). It carries out the reaction a secondary alcohol + NAD(+) = a ketone + NADH + H(+). In Pisum sativum (Garden pea), this protein is Alcohol dehydrogenase 1.